The following is a 379-amino-acid chain: Cytochrome b (379 aa).

The next 4 helical transmembrane spans lie at 33 to 53 (FGSLLGLCLIIQIASGLFLDM), 77 to 98 (WLIRYIHANGASLFFVCLYLHI), 113 to 133 (WNIGIILLFLTMATAFMGYVL), and 178 to 198 (FFAFHFILPFIIAAMAMVHLL). Heme b is bound by residues H83 and H97. The heme b site is built by H182 and H196. Residue H201 coordinates a ubiquinone. A run of 4 helical transmembrane segments spans residues 226-246 (TKDFLGIVLLLTFFFTMVPFF), 288-308 (LGGVIALILSILILALLPHIQ), 320-340 (ISQFLFWLLVSDVLVLTWIGG), and 347-367 (FIIIGQIASLSYFTIILVLMP).

The protein belongs to the cytochrome b family. As to quaternary structure, the cytochrome bc1 complex contains 11 subunits: 3 respiratory subunits (MT-CYB, CYC1 and UQCRFS1), 2 core proteins (UQCRC1 and UQCRC2) and 6 low-molecular weight proteins (UQCRH/QCR6, UQCRB/QCR7, UQCRQ/QCR8, UQCR10/QCR9, UQCR11/QCR10 and a cleavage product of UQCRFS1). This cytochrome bc1 complex then forms a dimer. It depends on heme b as a cofactor.

The protein localises to the mitochondrion inner membrane. Its function is as follows. Component of the ubiquinol-cytochrome c reductase complex (complex III or cytochrome b-c1 complex) that is part of the mitochondrial respiratory chain. The b-c1 complex mediates electron transfer from ubiquinol to cytochrome c. Contributes to the generation of a proton gradient across the mitochondrial membrane that is then used for ATP synthesis. The sequence is that of Cytochrome b (MT-CYB) from Dipodomys nelsoni (Nelson's kangaroo rat).